Here is a 631-residue protein sequence, read N- to C-terminus: Phosphomethylpyrimidine synthase (631 aa).

Substrate-binding positions include N239, M268, Y297, H333, S353–G355, D394–R397, and E433. Zn(2+) is bound at residue H437. Position 460 (Y460) interacts with substrate. Position 501 (H501) interacts with Zn(2+). [4Fe-4S] cluster contacts are provided by C581, C584, and C589.

It belongs to the ThiC family. In terms of assembly, homodimer. [4Fe-4S] cluster is required as a cofactor.

It catalyses the reaction 5-amino-1-(5-phospho-beta-D-ribosyl)imidazole + S-adenosyl-L-methionine = 4-amino-2-methyl-5-(phosphooxymethyl)pyrimidine + CO + 5'-deoxyadenosine + formate + L-methionine + 3 H(+). Its pathway is cofactor biosynthesis; thiamine diphosphate biosynthesis. Its function is as follows. Catalyzes the synthesis of the hydroxymethylpyrimidine phosphate (HMP-P) moiety of thiamine from aminoimidazole ribotide (AIR) in a radical S-adenosyl-L-methionine (SAM)-dependent reaction. In Escherichia coli O127:H6 (strain E2348/69 / EPEC), this protein is Phosphomethylpyrimidine synthase.